Consider the following 167-residue polypeptide: Keratin-associated protein 1-3 (167 aa).

Belongs to the KRTAP type 1 family. In terms of assembly, interacts with hair keratins. As to expression, expressed in the middle/upper portions of the hair cortex, in the region termed the keratogenous zone.

In terms of biological role, in the hair cortex, hair keratin intermediate filaments are embedded in an interfilamentous matrix, consisting of hair keratin-associated proteins (KRTAP), which are essential for the formation of a rigid and resistant hair shaft through their extensive disulfide bond cross-linking with abundant cysteine residues of hair keratins. The matrix proteins include the high-sulfur and high-glycine-tyrosine keratins. This Homo sapiens (Human) protein is Keratin-associated protein 1-3 (KRTAP1-3).